The chain runs to 149 residues: D-aminoacyl-tRNA deacylase (149 aa).

Positions Gly-137–Pro-138 match the Gly-cisPro motif, important for rejection of L-amino acids motif.

This sequence belongs to the DTD family. Homodimer.

It is found in the cytoplasm. It carries out the reaction glycyl-tRNA(Ala) + H2O = tRNA(Ala) + glycine + H(+). The catalysed reaction is a D-aminoacyl-tRNA + H2O = a tRNA + a D-alpha-amino acid + H(+). Functionally, an aminoacyl-tRNA editing enzyme that deacylates mischarged D-aminoacyl-tRNAs. Also deacylates mischarged glycyl-tRNA(Ala), protecting cells against glycine mischarging by AlaRS. Acts via tRNA-based rather than protein-based catalysis; rejects L-amino acids rather than detecting D-amino acids in the active site. By recycling D-aminoacyl-tRNA to D-amino acids and free tRNA molecules, this enzyme counteracts the toxicity associated with the formation of D-aminoacyl-tRNA entities in vivo and helps enforce protein L-homochirality. The polypeptide is D-aminoacyl-tRNA deacylase (Clostridium acetobutylicum (strain ATCC 824 / DSM 792 / JCM 1419 / IAM 19013 / LMG 5710 / NBRC 13948 / NRRL B-527 / VKM B-1787 / 2291 / W)).